The chain runs to 103 residues: uncharacterized protein (103 aa).

This is an uncharacterized protein from Pseudescherichia vulneris (Escherichia vulneris).